We begin with the raw amino-acid sequence, 159 residues long: Intron-encoded endonuclease ai4 (159 aa).

This sequence belongs to the LAGLIDADG endonuclease family.

The protein resides in the mitochondrion. In terms of biological role, mitochondrial DNA endonuclease involved in intron homing. In Dictyostelium discoideum (Social amoeba), this protein is Intron-encoded endonuclease ai4 (ai4).